Consider the following 404-residue polypeptide: CCA-adding enzyme (404 aa).

Positions 27 and 30 each coordinate ATP. The CTP site is built by Gly-27 and Arg-30. Residues Asp-40 and Asp-42 each coordinate Mg(2+). Residues Arg-111, Asp-154, Arg-157, Arg-160, and Arg-163 each coordinate ATP. The CTP site is built by Arg-111, Asp-154, Arg-157, Arg-160, and Arg-163.

This sequence belongs to the tRNA nucleotidyltransferase/poly(A) polymerase family. Bacterial CCA-adding enzyme type 3 subfamily. As to quaternary structure, homodimer. Requires Mg(2+) as cofactor.

It carries out the reaction a tRNA precursor + 2 CTP + ATP = a tRNA with a 3' CCA end + 3 diphosphate. It catalyses the reaction a tRNA with a 3' CCA end + 2 CTP + ATP = a tRNA with a 3' CCACCA end + 3 diphosphate. Functionally, catalyzes the addition and repair of the essential 3'-terminal CCA sequence in tRNAs without using a nucleic acid template. Adds these three nucleotides in the order of C, C, and A to the tRNA nucleotide-73, using CTP and ATP as substrates and producing inorganic pyrophosphate. tRNA 3'-terminal CCA addition is required both for tRNA processing and repair. Also involved in tRNA surveillance by mediating tandem CCA addition to generate a CCACCA at the 3' terminus of unstable tRNAs. While stable tRNAs receive only 3'-terminal CCA, unstable tRNAs are marked with CCACCA and rapidly degraded. The sequence is that of CCA-adding enzyme from Geobacillus kaustophilus (strain HTA426).